The following is a 314-amino-acid chain: MHNLRIVFAGTPDFAAKHLQALLNANLQVVAVYTQPDRPAGRGNKLTPSPVKILAVEHNIPVFQPENFKSAEAQQELAALKPDLMVVVAYGLLLPQQVLDTPRLGCINVHGSLLPGWRGAAPIQRAIWAGDPETGITIMQMDAGLDTGDMLHKMVCPITPEDTSASLYEKLAIDGPEGMLFTIQQIADGTAKPEKQNNELATYAKKLSKEEACINWQQDAAFIERCIRAFNPWPVSYFKLADLNIKVWKAEVLPNTAQQSPGMIIQASKAGLDIATGNGMLRIKQLQLPGKKAMSFADVLNARQDLFLQGNILP.

Residue Ser-112–Pro-115 participates in (6S)-5,6,7,8-tetrahydrofolate binding.

Belongs to the Fmt family.

The enzyme catalyses L-methionyl-tRNA(fMet) + (6R)-10-formyltetrahydrofolate = N-formyl-L-methionyl-tRNA(fMet) + (6S)-5,6,7,8-tetrahydrofolate + H(+). Attaches a formyl group to the free amino group of methionyl-tRNA(fMet). The formyl group appears to play a dual role in the initiator identity of N-formylmethionyl-tRNA by promoting its recognition by IF2 and preventing the misappropriation of this tRNA by the elongation apparatus. The protein is Methionyl-tRNA formyltransferase of Tolumonas auensis (strain DSM 9187 / NBRC 110442 / TA 4).